The sequence spans 149 residues: Arginine repressor (149 aa).

Belongs to the ArgR family.

The protein localises to the cytoplasm. It participates in amino-acid biosynthesis; L-arginine biosynthesis [regulation]. In terms of biological role, regulates arginine biosynthesis genes. The chain is Arginine repressor from Alkaliphilus oremlandii (strain OhILAs) (Clostridium oremlandii (strain OhILAs)).